Here is a 142-residue protein sequence, read N- to C-terminus: Cell division protein SepF (142 aa).

Acidic residues predominate over residues 21–31 (ETTTVEEEREE). A disordered region spans residues 21-46 (ETTTVEEEREEQESSHKRQPAISRTN).

This sequence belongs to the SepF family. In terms of assembly, homodimer. Interacts with FtsZ.

It is found in the cytoplasm. Its function is as follows. Cell division protein that is part of the divisome complex and is recruited early to the Z-ring. Probably stimulates Z-ring formation, perhaps through the cross-linking of FtsZ protofilaments. Its function overlaps with FtsA. The chain is Cell division protein SepF from Brevibacillus brevis (strain 47 / JCM 6285 / NBRC 100599).